A 245-amino-acid chain; its full sequence is Protein DEHYDRATION-INDUCED 19 homolog 4 (245 aa).

Belongs to the Di19 family.

This Oryza sativa subsp. japonica (Rice) protein is Protein DEHYDRATION-INDUCED 19 homolog 4 (DI19-4).